Consider the following 270-residue polypeptide: Transmembrane protein 176B (270 aa).

4 helical membrane passes run 65–85 (LALG…GVCL), 95–115 (ASGC…GAIV), 127–147 (ISSL…VLCV), and 209–229 (LFLA…GVGL). Phosphoserine occurs at positions 236, 245, 254, and 258. Positions 237-270 (SQPLNEEGSEKRLLGENSVPPSPSREQTSTAIVL) are disordered. Over residues 260 to 270 (SREQTSTAIVL) the composition is skewed to polar residues.

Belongs to the TMEM176 family. As to expression, expressed in lung and dermal fibroblasts.

The protein localises to the nucleus membrane. May play a role in the process of maturation of dendritic cells. Required for the development of cerebellar granule cells. This Homo sapiens (Human) protein is Transmembrane protein 176B (TMEM176B).